We begin with the raw amino-acid sequence, 211 residues long: Superoxide dismutase [Cu-Zn], chloroplastic (211 aa).

The transit peptide at 1–57 directs the protein to the chloroplast; sequence MQAILAAAMAAQTLLFSATAPPASLFQSPSSARPFHSLRLAAGPAGAAAARALVVAD. Residues histidine 103, histidine 105, and histidine 120 each coordinate Cu cation. Residues cysteine 114 and cysteine 203 are joined by a disulfide bond. Zn(2+)-binding residues include histidine 120, histidine 128, histidine 137, and aspartate 140. Residue histidine 177 coordinates Cu cation.

Belongs to the Cu-Zn superoxide dismutase family. In terms of assembly, homotetramer. Requires Cu cation as cofactor. Zn(2+) is required as a cofactor.

Its subcellular location is the plastid. It localises to the chloroplast. The enzyme catalyses 2 superoxide + 2 H(+) = H2O2 + O2. In terms of biological role, destroys radicals which are normally produced within the cells and which are toxic to biological systems. The sequence is that of Superoxide dismutase [Cu-Zn], chloroplastic (SODCP) from Oryza sativa subsp. japonica (Rice).